Here is a 146-residue protein sequence, read N- to C-terminus: UPF0178 protein BAMEG_1545 (146 aa).

The protein belongs to the UPF0178 family.

The protein is UPF0178 protein BAMEG_1545 of Bacillus anthracis (strain CDC 684 / NRRL 3495).